The sequence spans 464 residues: tRNA-2-methylthio-N(6)-dimethylallyladenosine synthase (464 aa).

The MTTase N-terminal domain occupies glycine 19–leucine 135. [4Fe-4S] cluster-binding residues include cysteine 28, cysteine 64, cysteine 98, cysteine 170, cysteine 174, and cysteine 177. The Radical SAM core domain occupies arginine 156–arginine 394. Residues glutamine 396–leucine 464 enclose the TRAM domain.

Belongs to the methylthiotransferase family. MiaB subfamily. As to quaternary structure, monomer. Requires [4Fe-4S] cluster as cofactor.

The protein localises to the cytoplasm. The catalysed reaction is N(6)-dimethylallyladenosine(37) in tRNA + (sulfur carrier)-SH + AH2 + 2 S-adenosyl-L-methionine = 2-methylsulfanyl-N(6)-dimethylallyladenosine(37) in tRNA + (sulfur carrier)-H + 5'-deoxyadenosine + L-methionine + A + S-adenosyl-L-homocysteine + 2 H(+). In terms of biological role, catalyzes the methylthiolation of N6-(dimethylallyl)adenosine (i(6)A), leading to the formation of 2-methylthio-N6-(dimethylallyl)adenosine (ms(2)i(6)A) at position 37 in tRNAs that read codons beginning with uridine. The sequence is that of tRNA-2-methylthio-N(6)-dimethylallyladenosine synthase from Prochlorococcus marinus (strain MIT 9301).